A 162-amino-acid polypeptide reads, in one-letter code: Urease subunit beta (162 aa).

Residues 116-162 (WRRSSAAGDAPQELPQVEAAERGRKLDDATDVDTNVGTEEGFEEGRN) are disordered. A compositionally biased stretch (basic and acidic residues) spans 134–143 (AAERGRKLDD).

Belongs to the urease beta subunit family. Heterotrimer of UreA (gamma), UreB (beta) and UreC (alpha) subunits. Three heterotrimers associate to form the active enzyme.

The protein localises to the cytoplasm. It carries out the reaction urea + 2 H2O + H(+) = hydrogencarbonate + 2 NH4(+). It functions in the pathway nitrogen metabolism; urea degradation; CO(2) and NH(3) from urea (urease route): step 1/1. This Corynebacterium glutamicum (strain ATCC 13032 / DSM 20300 / JCM 1318 / BCRC 11384 / CCUG 27702 / LMG 3730 / NBRC 12168 / NCIMB 10025 / NRRL B-2784 / 534) protein is Urease subunit beta.